The sequence spans 434 residues: MYGRGSGAEHSRGSGAEHFWDPRPEASSTVSSSLRPPSGARDLLPREVQRREKLEAQLTRVFRRHGYQRIITPTLERLETLLAGGSIRAESVLQLRDGEGTMLGLRPEFTASIVRAAATRLAGGPLPLRLYYHGSVFRNSRREEGSYSSQEFFQSGVELIGAGGWLADAEILLLLADCIRSVGISSCEFSWTLLLGDVSLTESLLSAVAPTAQAAVRRAIAQLDYVYLESAPLPEAARQIGLQILGLRGQPGSVLSDLAQLPVPPERLRDLRQLCQVLEEHGVRVVLDLSLLQTLAYYTGIVFQAVASGEIIALGGRYDRLYALYSPQQVEQPGIGFTLLPDTLLRLLPPDPQTEEMGCKRLVVPLVPAGIPAALALAARWREECTAPLTRTEAVELELLDRAPEEIEAYARQCRIPEIAWVQADGSYHITHPG.

The disordered stretch occupies residues 1 to 48; the sequence is MYGRGSGAEHSRGSGAEHFWDPRPEASSTVSSSLRPPSGARDLLPREV. Residues 27–38 are compositionally biased toward low complexity; that stretch reads SSTVSSSLRPPS.

Belongs to the class-II aminoacyl-tRNA synthetase family. HisZ subfamily. In terms of assembly, heteromultimer composed of HisG and HisZ subunits.

The protein localises to the cytoplasm. Its pathway is amino-acid biosynthesis; L-histidine biosynthesis; L-histidine from 5-phospho-alpha-D-ribose 1-diphosphate: step 1/9. Required for the first step of histidine biosynthesis. May allow the feedback regulation of ATP phosphoribosyltransferase activity by histidine. The polypeptide is ATP phosphoribosyltransferase regulatory subunit (Synechococcus sp. (strain JA-2-3B'a(2-13)) (Cyanobacteria bacterium Yellowstone B-Prime)).